Consider the following 176-residue polypeptide: Negative modulator of initiation of replication (176 aa).

It belongs to the SeqA family. In terms of assembly, homodimer. Polymerizes to form helical filaments.

It localises to the cytoplasm. Functionally, negative regulator of replication initiation, which contributes to regulation of DNA replication and ensures that replication initiation occurs exactly once per chromosome per cell cycle. Binds to pairs of hemimethylated GATC sequences in the oriC region, thus preventing assembly of replication proteins and re-initiation at newly replicated origins. Repression is relieved when the region becomes fully methylated. In Hamiltonella defensa subsp. Acyrthosiphon pisum (strain 5AT), this protein is Negative modulator of initiation of replication.